A 274-amino-acid polypeptide reads, in one-letter code: MHIDWFVLLAQLVNFLILIYLLKRFLYTRIIQAMNEREAKIAARFDEAERLKREAEEAARVYEEKNSFLQGQEEKMLNQAREVVNHRQKEWMDSAREEVDAIRRRWIETVLQEKAAFLEHLRQRTGKQVFAIARKILDDLADTAIESKMVDVLIDRIHSLDPAEREKICSALEDSEEGAIVQSAFALFPEDRQRLTDTVRDLLGKPDAVIRYQESSDLIGGIEFLASGHRIAWSISDYLEHLEQDFDRVLHEEVRQTLPKPSGESVMPSEEQRP.

The helical transmembrane segment at 2 to 22 (HIDWFVLLAQLVNFLILIYLL) threads the bilayer.

The protein belongs to the ATPase B chain family. In terms of assembly, F-type ATPases have 2 components, F(1) - the catalytic core - and F(0) - the membrane proton channel. F(1) has five subunits: alpha(3), beta(3), gamma(1), delta(1), epsilon(1). F(0) has three main subunits: a(1), b(2) and c(10-14). The alpha and beta chains form an alternating ring which encloses part of the gamma chain. F(1) is attached to F(0) by a central stalk formed by the gamma and epsilon chains, while a peripheral stalk is formed by the delta and b chains.

The protein resides in the cell inner membrane. Functionally, f(1)F(0) ATP synthase produces ATP from ADP in the presence of a proton or sodium gradient. F-type ATPases consist of two structural domains, F(1) containing the extramembraneous catalytic core and F(0) containing the membrane proton channel, linked together by a central stalk and a peripheral stalk. During catalysis, ATP synthesis in the catalytic domain of F(1) is coupled via a rotary mechanism of the central stalk subunits to proton translocation. Its function is as follows. Component of the F(0) channel, it forms part of the peripheral stalk, linking F(1) to F(0). The chain is ATP synthase subunit b 2 from Syntrophus aciditrophicus (strain SB).